We begin with the raw amino-acid sequence, 37 residues long: Large ribosomal subunit protein bL36A (37 aa).

The protein belongs to the bacterial ribosomal protein bL36 family.

In Haemophilus ducreyi (strain 35000HP / ATCC 700724), this protein is Large ribosomal subunit protein bL36A.